The primary structure comprises 360 residues: UDP-N-acetylglucosamine--N-acetylmuramyl-(pentapeptide) pyrophosphoryl-undecaprenol N-acetylglucosamine transferase (360 aa).

Residues 12–14 (TGG), N124, R161, S189, I243, and Q288 contribute to the UDP-N-acetyl-alpha-D-glucosamine site.

This sequence belongs to the glycosyltransferase 28 family. MurG subfamily.

The protein localises to the cell inner membrane. It catalyses the reaction di-trans,octa-cis-undecaprenyl diphospho-N-acetyl-alpha-D-muramoyl-L-alanyl-D-glutamyl-meso-2,6-diaminopimeloyl-D-alanyl-D-alanine + UDP-N-acetyl-alpha-D-glucosamine = di-trans,octa-cis-undecaprenyl diphospho-[N-acetyl-alpha-D-glucosaminyl-(1-&gt;4)]-N-acetyl-alpha-D-muramoyl-L-alanyl-D-glutamyl-meso-2,6-diaminopimeloyl-D-alanyl-D-alanine + UDP + H(+). It participates in cell wall biogenesis; peptidoglycan biosynthesis. Cell wall formation. Catalyzes the transfer of a GlcNAc subunit on undecaprenyl-pyrophosphoryl-MurNAc-pentapeptide (lipid intermediate I) to form undecaprenyl-pyrophosphoryl-MurNAc-(pentapeptide)GlcNAc (lipid intermediate II). The sequence is that of UDP-N-acetylglucosamine--N-acetylmuramyl-(pentapeptide) pyrophosphoryl-undecaprenol N-acetylglucosamine transferase from Acidithiobacillus ferrooxidans (strain ATCC 23270 / DSM 14882 / CIP 104768 / NCIMB 8455) (Ferrobacillus ferrooxidans (strain ATCC 23270)).